The primary structure comprises 290 residues: Fat storage-inducing transmembrane protein 1 (290 aa).

Residues methionine 1 to arginine 18 are Lumenal-facing. Residues threonine 19–glycine 39 traverse the membrane as a helical segment. Over serine 40–arginine 54 the chain is Cytoplasmic. The chain crosses the membrane as a helical span at residues leucine 55–asparagine 75. The Lumenal segment spans residues proline 76 to serine 94. A helical membrane pass occupies residues alanine 95–threonine 115. Topologically, residues arginine 116–alanine 141 are cytoplasmic. A helical transmembrane segment spans residues phenylalanine 142–leucine 162. The Lumenal portion of the chain corresponds to histidine 163–threonine 187. The active site involves histidine 186. A helical membrane pass occupies residues phenylalanine 188 to leucine 208. Topologically, residues alanine 209–leucine 220 are cytoplasmic. The helical transmembrane segment at valine 221 to isoleucine 241 threads the bilayer. The Lumenal segment spans residues tyrosine 242–lysine 249. Histidine 244 is a catalytic residue. The helical transmembrane segment at valine 250 to glutamine 270 threads the bilayer. At proline 271–asparagine 290 the chain is on the cytoplasmic side.

This sequence belongs to the FIT family. FIT1 subfamily.

The protein localises to the endoplasmic reticulum membrane. Its function is as follows. Plays an important role in the formation of lipid droplets (LDs) which are storage organelles at the center of lipid and energy homeostasis. Directly binds to diacylglycerol (DAGs) and triacylglycerol. The polypeptide is Fat storage-inducing transmembrane protein 1 (Sus scrofa (Pig)).